The chain runs to 439 residues: Ribosomal protein uS12 methylthiotransferase RimO (439 aa).

The MTTase N-terminal domain maps to Lys3–Pro118. The [4Fe-4S] cluster site is built by Cys12, Cys48, Cys81, Cys157, Cys161, and Cys164. Residues Asn143–Glu370 enclose the Radical SAM core domain. The 66-residue stretch at Glu373–Ser438 folds into the TRAM domain.

The protein belongs to the methylthiotransferase family. RimO subfamily. [4Fe-4S] cluster is required as a cofactor.

The protein localises to the cytoplasm. It carries out the reaction L-aspartate(89)-[ribosomal protein uS12]-hydrogen + (sulfur carrier)-SH + AH2 + 2 S-adenosyl-L-methionine = 3-methylsulfanyl-L-aspartate(89)-[ribosomal protein uS12]-hydrogen + (sulfur carrier)-H + 5'-deoxyadenosine + L-methionine + A + S-adenosyl-L-homocysteine + 2 H(+). In terms of biological role, catalyzes the methylthiolation of an aspartic acid residue of ribosomal protein uS12. This chain is Ribosomal protein uS12 methylthiotransferase RimO, found in Leptospira borgpetersenii serovar Hardjo-bovis (strain JB197).